The chain runs to 606 residues: DNA primase (606 aa).

A CHC2-type zinc finger spans residues cysteine 40–cysteine 64. The Toprim domain maps to lysine 256–glycine 349. Mg(2+)-binding residues include glutamate 262, aspartate 307, and aspartate 309. Residues valine 429–leucine 451 form a disordered region. Over residues proline 441 to leucine 451 the composition is skewed to pro residues.

Belongs to the DnaG primase family. In terms of assembly, monomer. Interacts with DnaB. The cofactor is Zn(2+). Requires Mg(2+) as cofactor.

The catalysed reaction is ssDNA + n NTP = ssDNA/pppN(pN)n-1 hybrid + (n-1) diphosphate.. Its function is as follows. RNA polymerase that catalyzes the synthesis of short RNA molecules used as primers for DNA polymerase during DNA replication. This is DNA primase from Myxococcus xanthus.